A 342-amino-acid chain; its full sequence is tRNA dimethylallyltransferase (342 aa).

39 to 46 is a binding site for ATP; sequence GPTGSGKT. 41 to 46 contributes to the substrate binding site; the sequence is TGSGKT. The segment at 64–67 is interaction with substrate tRNA; that stretch reads DSMQ.

The protein belongs to the IPP transferase family. In terms of assembly, monomer. The cofactor is Mg(2+).

It carries out the reaction adenosine(37) in tRNA + dimethylallyl diphosphate = N(6)-dimethylallyladenosine(37) in tRNA + diphosphate. Catalyzes the transfer of a dimethylallyl group onto the adenine at position 37 in tRNAs that read codons beginning with uridine, leading to the formation of N6-(dimethylallyl)adenosine (i(6)A). This chain is tRNA dimethylallyltransferase, found in Chlamydia abortus (strain DSM 27085 / S26/3) (Chlamydophila abortus).